Reading from the N-terminus, the 247-residue chain is Protein NipSnap homolog 3B (247 aa).

Lysine 45 and lysine 57 each carry N6-succinyllysine.

The protein belongs to the NipSnap family.

The sequence is that of Protein NipSnap homolog 3B (NIPSNAP3B) from Homo sapiens (Human).